Here is a 438-residue protein sequence, read N- to C-terminus: Trigger factor (438 aa).

Residues 163–248 (GDTAIIDFAG…VKEIKRKEIA (86 aa)) enclose the PPIase FKBP-type domain.

It belongs to the FKBP-type PPIase family. Tig subfamily.

It localises to the cytoplasm. The enzyme catalyses [protein]-peptidylproline (omega=180) = [protein]-peptidylproline (omega=0). Its function is as follows. Involved in protein export. Acts as a chaperone by maintaining the newly synthesized protein in an open conformation. Functions as a peptidyl-prolyl cis-trans isomerase. The sequence is that of Trigger factor from Pelotomaculum thermopropionicum (strain DSM 13744 / JCM 10971 / SI).